The primary structure comprises 404 residues: Acetate kinase (404 aa).

Asn8 contacts Mg(2+). ATP is bound at residue Lys15. Arg92 is a binding site for substrate. Catalysis depends on Asp149, which acts as the Proton donor/acceptor. Residues 207-211 (HLGSG), 282-284 (DMR), and 327-331 (GIGEN) each bind ATP. Glu378 is a binding site for Mg(2+).

The protein belongs to the acetokinase family. As to quaternary structure, homodimer. The cofactor is Mg(2+). Requires Mn(2+) as cofactor.

The protein resides in the cytoplasm. The enzyme catalyses acetate + ATP = acetyl phosphate + ADP. The protein operates within metabolic intermediate biosynthesis; acetyl-CoA biosynthesis; acetyl-CoA from acetate: step 1/2. In terms of biological role, catalyzes the formation of acetyl phosphate from acetate and ATP. Can also catalyze the reverse reaction. This Nitrobacter hamburgensis (strain DSM 10229 / NCIMB 13809 / X14) protein is Acetate kinase.